Reading from the N-terminus, the 211-residue chain is MIQFLQGQVVTVTKNIQNRWFLILSVNGVGYELQVPHSLAQQWTPPPPEPQQVFTHLLVRQDQIALFGFGRLAERDLFGQLMGVTGIGAQLAIALIETLGLEGLVQAVVTGNVKQLCQTPGVGKKGAERLALELKTKLSQWHKLQMGTGETDSTLPTTALLEDLEMTLLALGYTQTEIQQAIAMVSQVPDVAQSEDPEVWIRQAIGWLSDH.

Residues 1 to 70 form a domain I region; that stretch reads MIQFLQGQVV…QDQIALFGFG (70 aa). A domain II region spans residues 71–149; sequence RLAERDLFGQ…QWHKLQMGTG (79 aa). Residues 150–158 form a flexible linker region; the sequence is ETDSTLPTT. The tract at residues 158–211 is domain III; it reads TALLEDLEMTLLALGYTQTEIQQAIAMVSQVPDVAQSEDPEVWIRQAIGWLSDH.

This sequence belongs to the RuvA family. In terms of assembly, homotetramer. Forms an RuvA(8)-RuvB(12)-Holliday junction (HJ) complex. HJ DNA is sandwiched between 2 RuvA tetramers; dsDNA enters through RuvA and exits via RuvB. An RuvB hexamer assembles on each DNA strand where it exits the tetramer. Each RuvB hexamer is contacted by two RuvA subunits (via domain III) on 2 adjacent RuvB subunits; this complex drives branch migration. In the full resolvosome a probable DNA-RuvA(4)-RuvB(12)-RuvC(2) complex forms which resolves the HJ.

The protein resides in the cytoplasm. Functionally, the RuvA-RuvB-RuvC complex processes Holliday junction (HJ) DNA during genetic recombination and DNA repair, while the RuvA-RuvB complex plays an important role in the rescue of blocked DNA replication forks via replication fork reversal (RFR). RuvA specifically binds to HJ cruciform DNA, conferring on it an open structure. The RuvB hexamer acts as an ATP-dependent pump, pulling dsDNA into and through the RuvAB complex. HJ branch migration allows RuvC to scan DNA until it finds its consensus sequence, where it cleaves and resolves the cruciform DNA. This Synechocystis sp. (strain ATCC 27184 / PCC 6803 / Kazusa) protein is Holliday junction branch migration complex subunit RuvA.